The following is a 66-amino-acid chain: Prokaryotic ubiquitin-like protein Pup (66 aa).

The segment covering 1–10 (MAGQEQQSSS) has biased composition (low complexity). Residues 1–39 (MAGQEQQSSSPREEEHEVADAPVPVPSSPQASAHTDGVD) are disordered. The tract at residues 23-60 (VPVPSSPQASAHTDGVDDLLDEIDGVLESNAEEFVRGF) is ARC ATPase binding. Deamidated glutamine is present on Gln-66. Gln-66 participates in a covalent cross-link: Isoglutamyl lysine isopeptide (Gln-Lys) (interchain with K-? in acceptor proteins).

This sequence belongs to the prokaryotic ubiquitin-like protein family. Strongly interacts with the proteasome-associated ATPase ARC through a hydrophobic interface; the interacting region of Pup lies in its C-terminal half. There is one Pup binding site per ARC hexamer ring. In terms of processing, is modified by deamidation of its C-terminal glutamine to glutamate by the deamidase Dop, a prerequisite to the subsequent pupylation process.

It participates in protein degradation; proteasomal Pup-dependent pathway. Functionally, protein modifier that is covalently attached to lysine residues of substrate proteins, thereby targeting them for proteasomal degradation. The tagging system is termed pupylation. In Renibacterium salmoninarum (strain ATCC 33209 / DSM 20767 / JCM 11484 / NBRC 15589 / NCIMB 2235), this protein is Prokaryotic ubiquitin-like protein Pup.